Here is a 373-residue protein sequence, read N- to C-terminus: Anhydro-N-acetylmuramic acid kinase (373 aa).

Gly12–Asp19 lines the ATP pocket.

It belongs to the anhydro-N-acetylmuramic acid kinase family.

It catalyses the reaction 1,6-anhydro-N-acetyl-beta-muramate + ATP + H2O = N-acetyl-D-muramate 6-phosphate + ADP + H(+). Its pathway is amino-sugar metabolism; 1,6-anhydro-N-acetylmuramate degradation. It functions in the pathway cell wall biogenesis; peptidoglycan recycling. In terms of biological role, catalyzes the specific phosphorylation of 1,6-anhydro-N-acetylmuramic acid (anhMurNAc) with the simultaneous cleavage of the 1,6-anhydro ring, generating MurNAc-6-P. Is required for the utilization of anhMurNAc either imported from the medium or derived from its own cell wall murein, and thus plays a role in cell wall recycling. The protein is Anhydro-N-acetylmuramic acid kinase of Salmonella gallinarum (strain 287/91 / NCTC 13346).